Consider the following 449-residue polypeptide: Putative F-box/LRR-repeat protein 23 (449 aa).

LRR repeat units follow at residues 14–37 (KLWR…HLKL) and 39–64 (GNGL…DLRR). The 48-residue stretch at 178–225 (LRNWAELPSKLTSSILLRLGAIEILQNAQKVCKPWHRVCKDPSMWRKI) folds into the F-box domain. LRR repeat units lie at residues 261–286 (WYYG…GLVR), 287–311 (CFPI…LEVS), 312–337 (YCLF…KLNR), 344–367 (SNSG…HLQL), 369–394 (GNGL…DLRQ), and 401–427 (VGDL…DSDD).

This Arabidopsis thaliana (Mouse-ear cress) protein is Putative F-box/LRR-repeat protein 23 (FBL23).